Reading from the N-terminus, the 444-residue chain is MLPSKLHALFCLCTCLALVYPFDWQDLNPVAYIESPAWVSKIQALMAAANIGQSKIPRGNGSYSVGCTDLMFDYTNKGTFLRLYYPSQDDDHSDTLWIPNKEYFLGLSKFLGTHWLVGKIMGLFFGSMTTPAAWNAHLRTGEKYPLIIFSHGLGAFRTIYSAIGIDLASHGFIVAAVEHRDGSASSTYYFKDQSAVEIGNKSWLYLRTLKRGEEEFPLRNEQLRQRAKECSQALSLILDIDHGRPVTNVLDLEFDVEQLKDSIDRDKIAIIGHSFGGATVIQTLSEDQRFRCGIALDAWMFPVGDEVYSRIPQPLFFINSERFQYPSNIIRMKKCFLPDRERKMITIRGSVHQNFVDFTFATSKIIGYLFTLKGDIDSNVAISLSNKASLAFLQKHLGLQKDFDQWDSLVEGEDHNLIPGTNINTTNHQAILQNSTGIERPNLD.

Residues 1-21 (MLPSKLHALFCLCTCLALVYP) form the signal peptide. 2 N-linked (GlcNAc...) asparagine glycosylation sites follow: Asn60 and Asn200. Ser274 serves as the catalytic Nucleophile. Residues Asp297 and His352 each act as charge relay system in the active site. N-linked (GlcNAc...) asparagine glycosylation is found at Asn424 and Asn434.

The protein belongs to the AB hydrolase superfamily. Lipase family. N-glycosylated. Plasma.

Its subcellular location is the secreted. It localises to the extracellular space. The catalysed reaction is a 1-O-alkyl-2-acetyl-sn-glycero-3-phosphocholine + H2O = a 1-O-alkyl-sn-glycero-3-phosphocholine + acetate + H(+). The enzyme catalyses 1-O-decyl-2-acetyl-sn-glycero-3-phosphocholine + H2O = 1-O-decyl-sn-glycero-3-phosphocholine + acetate + H(+). It catalyses the reaction 1-O-dodecyl-2-acetyl-sn-glycero-3-phosphocholine + H2O = 1-O-dodecyl-sn-glycero-3-phosphocholine + acetate + H(+). It carries out the reaction 1-O-tetradecyl-2-acetyl-sn-glycero-3-phosphocholine + H2O = 1-O-tetradecyl-sn-glycero-3-phosphocholine + acetate + H(+). The catalysed reaction is 1-O-hexadecyl-2-acetyl-sn-glycero-3-phosphocholine + H2O = 1-O-hexadecyl-sn-glycero-3-phosphocholine + acetate + H(+). The enzyme catalyses 1-O-octadecyl-2-acetyl-sn-glycero-3-phosphocholine + H2O = 1-O-octadecyl-sn-glycero-3-phosphocholine + acetate + H(+). It catalyses the reaction 1-hexadecanoyl-2-acetyl-sn-glycero-3-phosphocholine + H2O = 1-hexadecanoyl-sn-glycero-3-phosphocholine + acetate + H(+). It carries out the reaction 1-hexadecanoyl-2-propionyl-sn-glycero-3-phosphocholine + H2O = propanoate + 1-hexadecanoyl-sn-glycero-3-phosphocholine + H(+). The catalysed reaction is 1-hexadecanoyl-2-butanoyl-sn-glycero-3-phosphocholine + H2O = butanoate + 1-hexadecanoyl-sn-glycero-3-phosphocholine + H(+). The enzyme catalyses 1-hexadecanoyl-2-pentanoyl-sn-glycero-3-phosphocholine + H2O = pentanoate + 1-hexadecanoyl-sn-glycero-3-phosphocholine + H(+). It catalyses the reaction 1-hexadecanoyl-2-glutaroyl-sn-glycero-3-phosphocholine + H2O = glutarate + 1-hexadecanoyl-sn-glycero-3-phosphocholine + H(+). It carries out the reaction 1-hexadecanoyl-2-(5-oxopentanoyl)-sn-glycero-3-phosphocholine + H2O = 5-oxopentanoate + 1-hexadecanoyl-sn-glycero-3-phosphocholine + H(+). The catalysed reaction is 1-hexadecanoyl-2-(9-oxononanoyl)-sn-glycero-3-phosphocholine + H2O = 9-oxononanoate + 1-hexadecanoyl-sn-glycero-3-phosphocholine + H(+). The enzyme catalyses 1-hexadecanoyl-2-[9-hydroperoxy-(10E-octadecenoyl)]-sn-glycero-3-phosphocholine + H2O = 9-hydroperoxy-10E-octadecenoate + 1-hexadecanoyl-sn-glycero-3-phosphocholine + H(+). It catalyses the reaction 1-hexadecanoyl-2-(10-hydroperoxy-8E-octadecenoyl)-sn-glycero-3-phosphocholine + H2O = 10-hydroperoxy-(8E)-octadecenoate + 1-hexadecanoyl-sn-glycero-3-phosphocholine + H(+). Its function is as follows. Lipoprotein-associated calcium-independent phospholipase A2 involved in phospholipid catabolism during inflammatory and oxidative stress response. At the lipid-aqueous interface, hydrolyzes the ester bond of fatty acyl group attached at sn-2 position of phospholipids (phospholipase A2 activity). Specifically targets phospholipids with a short-chain fatty acyl group at sn-2 position. Can hydrolyze phospholipids with long fatty acyl chains, only if they carry oxidized functional groups. Hydrolyzes and inactivates platelet-activating factor (PAF, 1-O-alkyl-2-acetyl-sn-glycero-3-phosphocholine), a potent pro-inflammatory signaling lipid that acts through PTAFR on various innate immune cells. Hydrolyzes oxidatively truncated phospholipids carrying an aldehyde group at omega position, preventing their accumulation in low-density lipoprotein (LDL) particles and uncontrolled pro-inflammatory effects. As part of high-density lipoprotein (HDL) particles, can hydrolyze phospholipids having long-chain fatty acyl hydroperoxides at sn-2 position and protect against potential accumulation of these oxylipins in the vascular wall. Catalyzes the release from membrane phospholipids of F2-isoprostanes, lipid biomarkers of cellular oxidative damage. This chain is Platelet-activating factor acetylhydrolase (PLA2G7), found in Bos taurus (Bovine).